Here is a 535-residue protein sequence, read N- to C-terminus: uncharacterized protein (535 aa).

2 helical membrane passes run 7 to 27 (DFDV…AYLA) and 509 to 529 (GGAV…ACLA).

It is found in the cell membrane. This is an uncharacterized protein from Mycobacterium bovis (strain ATCC BAA-935 / AF2122/97).